The sequence spans 615 residues: Dihydroxy-acid dehydratase (615 aa).

D81 is a Mg(2+) binding site. C122 is a [2Fe-2S] cluster binding site. Positions 123 and 124 each coordinate Mg(2+). N6-carboxylysine is present on K124. C193 contributes to the [2Fe-2S] cluster binding site. E489 contributes to the Mg(2+) binding site. S515 functions as the Proton acceptor in the catalytic mechanism.

This sequence belongs to the IlvD/Edd family. As to quaternary structure, homodimer. It depends on [2Fe-2S] cluster as a cofactor. The cofactor is Mg(2+).

The catalysed reaction is (2R)-2,3-dihydroxy-3-methylbutanoate = 3-methyl-2-oxobutanoate + H2O. It carries out the reaction (2R,3R)-2,3-dihydroxy-3-methylpentanoate = (S)-3-methyl-2-oxopentanoate + H2O. Its pathway is amino-acid biosynthesis; L-isoleucine biosynthesis; L-isoleucine from 2-oxobutanoate: step 3/4. It functions in the pathway amino-acid biosynthesis; L-valine biosynthesis; L-valine from pyruvate: step 3/4. In terms of biological role, functions in the biosynthesis of branched-chain amino acids. Catalyzes the dehydration of (2R,3R)-2,3-dihydroxy-3-methylpentanoate (2,3-dihydroxy-3-methylvalerate) into 2-oxo-3-methylpentanoate (2-oxo-3-methylvalerate) and of (2R)-2,3-dihydroxy-3-methylbutanoate (2,3-dihydroxyisovalerate) into 2-oxo-3-methylbutanoate (2-oxoisovalerate), the penultimate precursor to L-isoleucine and L-valine, respectively. The polypeptide is Dihydroxy-acid dehydratase (Pseudomonas savastanoi pv. phaseolicola (strain 1448A / Race 6) (Pseudomonas syringae pv. phaseolicola (strain 1448A / Race 6))).